The primary structure comprises 1358 residues: MGKEAGAAESSTVVLAVNGKRYEAAGVAPSTSLLEFLRTQTPVRGPKLGCGEGGCGACVVLVSKYDPATDEVTEFSASSCLTLLHSVDRCSVTTSEGIGNTRDGYHPVQQRLSGFHASQCGFCTPGMCMSIFSALVKADNKSDRPDPPAGFSKITTSEAEKAVSGNLCRCTGYRPIVDTCKSFASDVDLEDLGLNCFWKKGEEPAEVSRLPGYNSGAVCTFPEFLKSEIKSTMKQVNDVPIAASGDGWYHPKSIEELHRLFDSSWFDDSSVKIVASNTGSGVYKDQDLYDKYIDIKGIPELSVINKNDKAIELGSVVSISKAIEVLSDGNLVFRKIADHLNKVASPFVRNTATIGGNIMMAQRLPFESDVATVLLAAGSTVTVQVASKRLCFTLEEFLEQPPCDSRTLLLSIFIPEWGSDYVTFETFRAAPRPFGNAVSYVNSAFLARTSGSLLIEDICLAFGAYGVDHAIRAKKVEDFLKGKSLSSFVILEAIKLLKDTVSPSEGTTHHEYRVSLAVSFLFSFLSSLANSSSAPSNIDTPNGSYTHETGSNVDSPERHIKVDSNDLPIRSRQEMVFSDEYKPVGKPIKKVGAEIQASGEAVYVDDIPAPKDCLYGAFIYSTHPHAHVRSINFKSSLASQKVITVITAKDIPSGGENIGSSFLMQGEALFADPIAEFAGQNIGVVIAETQRYANMAAKQAVVEYSTENLQPPILTIEDAIQRNSYIQIPPFLAPKPVGDYNKGMAEADHKILSAEVKLESQYYFYMETQAALAIPDEDNCITIYSSTQMPELTQNLIARCLGIPFHNVRVISRRVGGGFGGKAMKATHTACACALAAFKLRRPVRMYLDRKTDMIMAGGRHPMKAKYSVGFKSDGKITALHLDLGINAGISPDVSPLMPRAIIGALKKYNWGTLEFDTKVCKTNVSSKSAMRAPGDVQGSFIAEAIIEHVASALALDTNTVRRKNLHDFESLEVFYGESAGEASTYSLVSMFDKLALSPEYQHRAAMIEQFNSSNKWKKRGISCVPATYEVNLRPTPGKVSIMNDGSIAVEVGGIEIGQGLWTKVKQMTAFGLGQLCPDGGECLLDKVRVIQADTLSLIQGGMTAGSTTSETSCETVRQSCVALVEKLNPIKESLEAKSNTVEWSALIAQASMASVNLSAQPYWTPDPSFKSYLNYGAGTSEVEVDILTGATTILRSDLVYDCGQSLNPAVDLGQIEGCFVQGIGFFTNEDYKTNSDGLVIHDGTWTYKIPTVDNIPKEFNVEMFNSAPDKKRVLSSKASGEPPLVLATSVHCAMREAIRAARKEFSVSTSPAKSAVTFQMDVPATMPVVKELCGLDVVERYLENVSAASAGPNTAKA.

In terms of domain architecture, 2Fe-2S ferredoxin-type spans 11 to 98; it reads STVVLAVNGK…RCSVTTSEGI (88 aa). [2Fe-2S] cluster is bound by residues Cys-50, Cys-55, and Cys-58. The region spanning 241–419 is the FAD-binding PCMH-type domain; sequence IAASGDGWYH…LSIFIPEWGS (179 aa). Residues 532–559 are disordered; it reads SSAPSNIDTPNGSYTHETGSNVDSPERH. A compositionally biased stretch (polar residues) spans 537 to 554; the sequence is NIDTPNGSYTHETGSNVD.

Belongs to the xanthine dehydrogenase family. In terms of assembly, aldehyde oxidases (AO) are homodimers and heterodimers of AO subunits. [2Fe-2S] cluster is required as a cofactor. The cofactor is FAD. Requires Mo-molybdopterin as cofactor. Mostly expressed in roots, and, to a lower extent, in mesocotyl, leaves and coleoptile. Accumulates in apical region of maize coleoptiles (at protein level).

It is found in the cytoplasm. The catalysed reaction is indole-3-acetaldehyde + O2 + H2O = (indol-3-yl)acetate + H2O2 + H(+). With respect to regulation, inhibited by 2-mercaptoethanol, p-chloromercuribenzoate, and iodoacetate. In terms of biological role, in higher plants aldehyde oxidases (AO) appear to be homo- and heterodimeric assemblies of AO subunits with probably different physiological functions. Involved in the biosynthesis of auxin from (indol-3-yl)acetaldehyde. Can also use indole-3-aldehyde and benzaldehyde as substrate. The chain is Indole-3-acetaldehyde oxidase (AO1) from Zea mays (Maize).